The chain runs to 620 residues: Chaperone protein DnaK (620 aa).

Thr197 carries the phosphothreonine; by autocatalysis modification. The segment at 597-620 is disordered; the sequence is AMANKNNAEQPKKKDDDVIDAEVE.

This sequence belongs to the heat shock protein 70 family.

Acts as a chaperone. In Helicobacter pylori (strain Shi470), this protein is Chaperone protein DnaK.